We begin with the raw amino-acid sequence, 528 residues long: Phosphoenolpyruvate carboxykinase (ATP) (528 aa).

Residues R56, Y192, and K198 each contribute to the substrate site. Residues K198, H217, and 233–241 (GLSGTGKTT) contribute to the ATP site. K198 and H217 together coordinate Mn(2+). Residue D254 coordinates Mn(2+). Positions 282, 319, and 444 each coordinate ATP. R319 is a binding site for substrate.

This sequence belongs to the phosphoenolpyruvate carboxykinase (ATP) family. It depends on Mn(2+) as a cofactor.

Its subcellular location is the cytoplasm. The enzyme catalyses oxaloacetate + ATP = phosphoenolpyruvate + ADP + CO2. Its pathway is carbohydrate biosynthesis; gluconeogenesis. Involved in the gluconeogenesis. Catalyzes the conversion of oxaloacetate (OAA) to phosphoenolpyruvate (PEP) through direct phosphoryl transfer between the nucleoside triphosphate and OAA. In Bacillus cereus (strain AH187), this protein is Phosphoenolpyruvate carboxykinase (ATP).